A 120-amino-acid chain; its full sequence is Putative cysteine proteinase inhibitor 11 (120 aa).

Residues M1 to A24 form the signal peptide. A Secondary area of contact motif is present at residues Q73–G77.

It belongs to the cystatin family. Phytocystatin subfamily.

The protein resides in the secreted. Specific inhibitor of cysteine proteinases. Probably involved in the regulation of endogenous processes and in defense against pests and pathogens. This Oryza sativa subsp. japonica (Rice) protein is Putative cysteine proteinase inhibitor 11.